A 385-amino-acid polypeptide reads, in one-letter code: MAEGKAMSEFLPFSRPAMGVEELAAVKEVLESGWITTGPKNQALEQAFCQLTGNQHAIAVSSATAGMHITLMALKIGKGDEVITPSLTWVSTLNMISLLGATPVMVDVDRDTLMVTPEAIESAITPRTKAIIPVHYAGAPADIDAIRAIGERYGIAVIEDAAHAVGTYYKGRHIGAKGTAIFSFHAIKNITCAEGGLIVTDNENLARQLRMLKFHGLGVDAYDRQTWGRAPQAEVLTPGYKYNLTDINAAIALTQLVKLEHLNTRRREIAQQYQQALAALPFQPLSLPAWPHVHAWHLFIIRVDEQRCGISRDALMEALKERGIGTGLHFRAAHTQKYYRERFPTLSLPNTEWNSERICSLPLFPDMTTADADHVITALQQLAGQ.

Lys188 is modified (N6-(pyridoxal phosphate)lysine).

It belongs to the DegT/DnrJ/EryC1 family. ArnB subfamily. Homodimer. The cofactor is pyridoxal 5'-phosphate.

It catalyses the reaction UDP-4-amino-4-deoxy-beta-L-arabinose + 2-oxoglutarate = UDP-beta-L-threo-pentopyranos-4-ulose + L-glutamate. The protein operates within nucleotide-sugar biosynthesis; UDP-4-deoxy-4-formamido-beta-L-arabinose biosynthesis; UDP-4-deoxy-4-formamido-beta-L-arabinose from UDP-alpha-D-glucuronate: step 2/3. Its pathway is bacterial outer membrane biogenesis; lipopolysaccharide biosynthesis. Its function is as follows. Catalyzes the conversion of UDP-4-keto-arabinose (UDP-Ara4O) to UDP-4-amino-4-deoxy-L-arabinose (UDP-L-Ara4N). The modified arabinose is attached to lipid A and is required for resistance to polymyxin and cationic antimicrobial peptides. This chain is UDP-4-amino-4-deoxy-L-arabinose--oxoglutarate aminotransferase (arnB), found in Escherichia coli (strain K12).